We begin with the raw amino-acid sequence, 438 residues long: Coenzyme A disulfide reductase (438 aa).

8-33 (GAVAGGATCASQIRRLDKESDIIIFE) is an FAD binding site. Substrate-binding residues include Thr15, Gln19, Arg22, Ser39, and Asn42. Catalysis depends on Cys43, which acts as the Nucleophile. The active-site Redox-active is the Cys43. Lys71 contributes to the substrate binding site. 151-166 (VLVVGAGYVSLEVLEN) lines the NADP(+) pocket. Residue 267-277 (TNVPNIYAIGD) coordinates FAD. Substrate is bound at residue His299. FAD is bound at residue Tyr419. Lys427 is a substrate binding site.

The protein belongs to the class-III pyridine nucleotide-disulfide oxidoreductase family. Homodimer. FAD serves as cofactor.

The catalysed reaction is NADP(+) + 2 CoA = CoA-disulfide + NADPH + H(+). Functionally, catalyzes specifically the NADPH-dependent reduction of coenzyme A disulfide. The chain is Coenzyme A disulfide reductase from Staphylococcus aureus (strain MSSA476).